Here is a 257-residue protein sequence, read N- to C-terminus: Ribosomal RNA small subunit methyltransferase J (257 aa).

S-adenosyl-L-methionine is bound by residues 107-108 (RD), 123-124 (ER), and Asp-177.

Belongs to the methyltransferase superfamily. RsmJ family.

The protein resides in the cytoplasm. It catalyses the reaction guanosine(1516) in 16S rRNA + S-adenosyl-L-methionine = N(2)-methylguanosine(1516) in 16S rRNA + S-adenosyl-L-homocysteine + H(+). In terms of biological role, specifically methylates the guanosine in position 1516 of 16S rRNA. This Haemophilus influenzae (strain 86-028NP) protein is Ribosomal RNA small subunit methyltransferase J.